Reading from the N-terminus, the 234-residue chain is Small ribosomal subunit protein uS3 (234 aa).

The KH type-2 domain maps to 39-107; the sequence is VRKFLNKELA…PAQINIAEVK (69 aa).

It belongs to the universal ribosomal protein uS3 family. Part of the 30S ribosomal subunit. Forms a tight complex with proteins S10 and S14.

Its function is as follows. Binds the lower part of the 30S subunit head. Binds mRNA in the 70S ribosome, positioning it for translation. This is Small ribosomal subunit protein uS3 from Haemophilus ducreyi (strain 35000HP / ATCC 700724).